Here is a 483-residue protein sequence, read N- to C-terminus: E3 ubiquitin-protein ligase TRIM50 (483 aa).

The RING-type zinc finger occupies 16-57 (CPICLEVFKEPLMLQCGHSYCKNCLDSLSEHLDSELRCPVCR). The segment at 84–125 (TEPTVCVHHRNPLSLFCEKDQEFICGLCGLLGSHQHHRVTPV) adopts a B box-type zinc-finger fold. Zn(2+) contacts are provided by Cys-89, His-92, Cys-111, and His-117. Coiled-coil stretches lie at residues 127–169 (TVYS…NESD) and 203–236 (GLVA…GNES). Positions 275 to 474 (DIKLTVWKRL…LPMVLPPPSA (200 aa)) constitute a B30.2/SPRY domain. Lys-372 is subject to N6-acetyllysine.

It belongs to the TRIM/RBCC family. Can form dimers and trimers. Interacts with several E2 ubiquitin-conjugating enzymes, including UBE2L6, UBE2E1, UBE2E3. No interaction with UBE2H. Interacts with BECN1. Interacts with SQSTM1. Interacts with NLRP3. In terms of processing, auto-ubiquitinated. Post-translationally, acetylated by EP300 and KAT2B. HDAC6 drives TRIM50 deacetylation. Acetylation antagonizes with TRIM50 ubiquitination.

The protein resides in the cytoplasm. It catalyses the reaction S-ubiquitinyl-[E2 ubiquitin-conjugating enzyme]-L-cysteine + [acceptor protein]-L-lysine = [E2 ubiquitin-conjugating enzyme]-L-cysteine + N(6)-ubiquitinyl-[acceptor protein]-L-lysine.. In terms of biological role, E3 ubiquitin-protein ligase that ubiquitinates Beclin-1/BECN1 in a 'Lys-63'-dependent manner enhancing its binding to ULK1. In turn, promotes starvation-induced autophagy activation. Also interacts with p62/SQSTM1 protein and thereby induces the formation and the autophagy clearance of aggresome-associated polyubiquitinated proteins through HDAC6 interaction. Also promotes NLRP3 inflammasome activation by directly inducing NLRP3 oligomerization independent of its E3 ligase function. The sequence is that of E3 ubiquitin-protein ligase TRIM50 (Trim50) from Rattus norvegicus (Rat).